A 642-amino-acid polypeptide reads, in one-letter code: MHQVVTVKAEKVPMGKRLRRCKQEAENQQKVEEVAEKLEKEHEGLIEFHKSYHELFQFFCNNTTIHGAIRLVCSKRNKMKTAFWSVLFFLTFGLMYWQFGILYREYFSFPVNLNLNLNSDKLTFPAVTLCTLNPYRYSAVRKELDELDRITHQTLMDLYNYSMSQVQSNGAAQSSQKRSQRSLSHHVQRHPLRRRKRNEPVSLKGNSPPVDKSDWKIGFILCNETNEDCFHQTYSSGVDAVREWYSFHYINILARMPDTKALDESNFESFIYACRFNEVTCDKANYTHFHHPLYGNCYTFNDRNNSLWTSSLPGINNGLSLLVRTEQNDYIPLLSTVTGARVMVHEQNEPAFMDDGGFNVRPGIETSISMRKETTMLLGGSYSDCTEDGSDVPVQNLYSSRYTEQVCIRSCFQIHMVKRCGCAYYFYPLPPGAEYCDYTKHIAWGYCYYKLQVEFKSNILGCFSKCRKPCEVTKYQLSAGYSHWPSAVSENWVFHILSQQNKYNITSKRNGVAKVNIFFEEWKYKTNGESPAFTVVTLLSQLGNQWSLWFGSSVLSVVELAELILDFIAITIILSFKRFRSRQVPAPSVPPPGAHDNTAFQSEPADPSAPHRFTVEAVVTTLPSYNSLEPCRRDGEAVIGLE.

Residues 1 to 81 (MHQVVTVKAE…VCSKRNKMKT (81 aa)) are Cytoplasmic-facing. The chain crosses the membrane as a helical span at residues 82–102 (AFWSVLFFLTFGLMYWQFGIL). Residues 103–553 (YREYFSFPVN…NQWSLWFGSS (451 aa)) are Extracellular-facing. 10 cysteine pairs are disulfide-bonded: Cys-130-Cys-297, Cys-222-Cys-229, Cys-274-Cys-281, Cys-385-Cys-470, Cys-407-Cys-447, Cys-407-Cys-466, Cys-411-Cys-462, Cys-420-Cys-447, Cys-420-Cys-470, and Cys-422-Cys-436. Residues 170–209 (GAAQSSQKRSQRSLSHHVQRHPLRRRKRNEPVSLKGNSPP) are disordered. The segment covering 178–197 (RSQRSLSHHVQRHPLRRRKR) has biased composition (basic residues). A helical transmembrane segment spans residues 554–574 (VLSVVELAELILDFIAITIIL). Over 575 to 642 (SFKRFRSRQV…RDGEAVIGLE (68 aa)) the chain is Cytoplasmic. Residues 587–608 (PSVPPPGAHDNTAFQSEPADPS) form a disordered region.

This sequence belongs to the amiloride-sensitive sodium channel (TC 1.A.6) family. SCNN1A subfamily. As to quaternary structure, heterotrimer; disulfide-linked and containing an alpha/SCNN1A, a beta/SCNN1B and a gamma/SCNN1G subunit.

The protein localises to the apical cell membrane. The protein resides in the cell projection. It is found in the cilium. Its subcellular location is the cytoplasmic granule. It localises to the cytoplasm. The protein localises to the cytoplasmic vesicle. The protein resides in the secretory vesicle. It is found in the acrosome. Its subcellular location is the flagellum. It carries out the reaction Na(+)(in) = Na(+)(out). Its activity is regulated as follows. Originally identified and characterized by its inhibition by the diuretic drug amiloride. This is one of the three pore-forming subunits of the heterotrimeric epithelial sodium channel (ENaC), a critical regulator of sodium balance and fluid homeostasis. ENaC operates in epithelial tissues, where it mediates the electrodiffusion of sodium ions from extracellular fluid through the apical membrane of cells, with water following osmotically. The protein is Epithelial sodium channel subunit alpha of Pelodiscus sinensis (Chinese softshell turtle).